Reading from the N-terminus, the 362-residue chain is Histidinol-phosphate aminotransferase 2 (362 aa).

Lysine 222 is subject to N6-(pyridoxal phosphate)lysine.

The protein belongs to the class-II pyridoxal-phosphate-dependent aminotransferase family. Histidinol-phosphate aminotransferase subfamily. As to quaternary structure, homodimer. It depends on pyridoxal 5'-phosphate as a cofactor.

The catalysed reaction is L-histidinol phosphate + 2-oxoglutarate = 3-(imidazol-4-yl)-2-oxopropyl phosphate + L-glutamate. It functions in the pathway amino-acid biosynthesis; L-histidine biosynthesis; L-histidine from 5-phospho-alpha-D-ribose 1-diphosphate: step 7/9. This chain is Histidinol-phosphate aminotransferase 2, found in Carboxydothermus hydrogenoformans (strain ATCC BAA-161 / DSM 6008 / Z-2901).